Reading from the N-terminus, the 1657-residue chain is Alsin (1657 aa).

RCC1 repeat units follow at residues Gly60 to Asn109, Gly110 to Ser168, and Arg169 to Cys219. The interval Thr432–Arg481 is disordered. A compositionally biased stretch (basic and acidic residues) spans Gly445–Lys455. A compositionally biased stretch (polar residues) spans Gln456–Leu467. Phosphoserine is present on residues Ser465, Ser466, Ser483, and Ser492. Position 510 is a phosphothreonine (Thr510). RCC1 repeat units follow at residues Thr526–Lys577 and Ser578–Thr628. An N6-acetyllysine modification is found at Lys533. One can recognise a DH domain in the interval Gly690–Lys885. The PH domain maps to Gly901–Ala1007. MORN repeat units follow at residues Tyr1049–Met1071, Tyr1072–Met1094, Tyr1100–Val1122, Phe1123–Ser1145, Phe1151–Glu1173, Tyr1175–Tyr1197, Tyr1198–Ile1220, and Tyr1221–Tyr1244. Phosphoserine is present on Ser1335. The region spanning Lys1513 to Asn1657 is the VPS9 domain.

As to quaternary structure, forms a heteromeric complex with ALS2CL. Interacts with ALS2CL.

In terms of biological role, may act as a GTPase regulator. Controls survival and growth of spinal motoneurons. The sequence is that of Alsin (ALS2) from Pan troglodytes (Chimpanzee).